Here is a 166-residue protein sequence, read N- to C-terminus: Large ribosomal subunit protein uL10 (166 aa).

The protein belongs to the universal ribosomal protein uL10 family. Part of the ribosomal stalk of the 50S ribosomal subunit. The N-terminus interacts with L11 and the large rRNA to form the base of the stalk. The C-terminus forms an elongated spine to which L12 dimers bind in a sequential fashion forming a multimeric L10(L12)X complex.

Forms part of the ribosomal stalk, playing a central role in the interaction of the ribosome with GTP-bound translation factors. This is Large ribosomal subunit protein uL10 from Bacillus mycoides (strain KBAB4) (Bacillus weihenstephanensis).